The following is a 275-amino-acid chain: Large ribosomal subunit protein uL2 (275 aa).

A compositionally biased stretch (basic and acidic residues) spans arginine 28–serine 38. 2 disordered regions span residues arginine 28–histidine 53 and glycine 222–lysine 275. Positions lysine 254–lysine 275 are enriched in basic residues.

Belongs to the universal ribosomal protein uL2 family. In terms of assembly, part of the 50S ribosomal subunit. Forms a bridge to the 30S subunit in the 70S ribosome.

In terms of biological role, one of the primary rRNA binding proteins. Required for association of the 30S and 50S subunits to form the 70S ribosome, for tRNA binding and peptide bond formation. It has been suggested to have peptidyltransferase activity; this is somewhat controversial. Makes several contacts with the 16S rRNA in the 70S ribosome. This Marinobacter nauticus (strain ATCC 700491 / DSM 11845 / VT8) (Marinobacter aquaeolei) protein is Large ribosomal subunit protein uL2.